A 146-amino-acid polypeptide reads, in one-letter code: Putative pre-16S rRNA nuclease (146 aa).

The protein belongs to the YqgF nuclease family.

The protein localises to the cytoplasm. Functionally, could be a nuclease involved in processing of the 5'-end of pre-16S rRNA. This is Putative pre-16S rRNA nuclease from Paraburkholderia phytofirmans (strain DSM 17436 / LMG 22146 / PsJN) (Burkholderia phytofirmans).